The chain runs to 122 residues: MIQQQTYLNVADNSGARKLMCLRVLGTGNCTYGGIGDKIIAVVKDAIPNMPVKKSDVVTAVIVRTRQTVRRDSGMSIRFDDNAAVIINNDGNPKGTRVFGPVARELRDKNYTKIVSLAPEVL.

It belongs to the universal ribosomal protein uL14 family. In terms of assembly, part of the 50S ribosomal subunit. Forms a cluster with proteins L3 and L19. In the 70S ribosome, L14 and L19 interact and together make contacts with the 16S rRNA in bridges B5 and B8.

Functionally, binds to 23S rRNA. Forms part of two intersubunit bridges in the 70S ribosome. The protein is Large ribosomal subunit protein uL14 of Microcystis aeruginosa (strain NIES-843 / IAM M-2473).